A 215-amino-acid polypeptide reads, in one-letter code: Probable phosphoglycerate mutase GpmB (215 aa).

Residues 8 to 15, 21 to 22, R58, K60, 82 to 85, 104 to 105, and 151 to 152 each bind substrate; these read RHGETQWN, QG, ELDM, RR, and GI. H9 (tele-phosphohistidine intermediate) is an active-site residue. E82 acts as the Proton donor/acceptor in catalysis.

This sequence belongs to the phosphoglycerate mutase family. GpmB subfamily.

It carries out the reaction (2R)-2-phosphoglycerate = (2R)-3-phosphoglycerate. It participates in carbohydrate degradation; glycolysis; pyruvate from D-glyceraldehyde 3-phosphate: step 3/5. This Salmonella choleraesuis (strain SC-B67) protein is Probable phosphoglycerate mutase GpmB.